Reading from the N-terminus, the 472-residue chain is Serralysin A (472 aa).

Positions 1-17 (MEKNLSSRDDDALHSLS) are excised as a propeptide. Histidine 186 serves as a coordination point for Zn(2+). Glutamate 187 is an active-site residue. 2 residues coordinate Zn(2+): histidine 190 and tyrosine 221. Residues arginine 258, glycine 260, threonine 262, aspartate 290, glycine 292, glycine 293, threonine 332, glutamate 334, glycine 339, glycine 341, aspartate 343, asparagine 348, alanine 350, asparagine 352, glycine 356, glycine 357, alanine 358, glycine 359, aspartate 361, glycine 365, glycine 366, glycine 367, glycine 368, aspartate 370, glycine 374, glycine 375, glycine 377, aspartate 379, aspartate 388, aspartate 395, and aspartate 405 each coordinate Ca(2+). Hemolysin-type calcium-binding repeat units follow at residues 337–354 (IGGS…DNIL) and 355–372 (RGGA…ADRL).

Belongs to the peptidase M10B family. The cofactor is Ca(2+). Requires Zn(2+) as cofactor.

Its subcellular location is the secreted. The enzyme catalyses Preferential cleavage of bonds with hydrophobic residues in P1'.. The polypeptide is Serralysin A (prtA) (Dickeya chrysanthemi (Pectobacterium chrysanthemi)).